The primary structure comprises 515 residues: Membrane-bound transcription factor site-2 protease (515 aa).

The Cytoplasmic segment spans residues 1 to 3; that stretch reads MIP. The chain crosses the membrane as a helical span at residues 4–24; sequence VSLLVVVVGGWTAVYLADLVL. At 25 to 74 the chain is on the lumenal side; sequence KSSVYFKHSYEDWLENNGLSISPFHIRWQTSIFNRAFYSWGRRKARMLYQ. The next 2 helical transmembrane spans lie at 75-95 and 96-107; these read WFNFGMVFGVIAMFSSFFLLG and KTLMQTLAQMMA. The Lumenal portion of the chain corresponds to 108–140; that stretch reads DSPSPYSSSSSSSSSSSSSSSSSSSLHNEQVLQ. Residues 141–165 form a helical membrane-spanning segment; that stretch reads VVVPGINLPVNQLTYFFAAVLISGV. Histidine 167 is a Zn(2+) binding site. Glutamate 168 is a catalytic residue. 3 consecutive transmembrane segments (helical) span residues 170-182, 183-205, and 225-247; these read GHGIAAIREQVRF, NGFGIFLFIIYPGAFVDLFTTHL, and FVLALLGILALVLLPVILLPFYY. Residue histidine 171 coordinates Zn(2+). Topologically, residues 248-442 are lumenal; the sequence is TGVGVLITEV…LPVIVETFVK (195 aa). An N-linked (GlcNAc...) asparagine glycan is attached at asparagine 333. A run of 2 helical transmembrane segments spans residues 443–460 and 461–472; these read YLISLSGALAIVNAVPCF and ALDGQWILNSFL. The Lumenal portion of the chain corresponds to 473–488; the sequence is DATLTSVIGDNDVKDL. The chain crosses the membrane as a helical span at residues 489–509; that stretch reads IGFFILLGGSVLLAANVTLGL. Residues 510 to 515 are Cytoplasmic-facing; the sequence is WMVTAR.

This sequence belongs to the peptidase M50A family. Requires Zn(2+) as cofactor.

It is found in the membrane. Its subcellular location is the cytoplasm. The protein localises to the golgi apparatus membrane. It carries out the reaction Cleaves several transcription factors that are type-2 transmembrane proteins within membrane-spanning domains. Known substrates include sterol regulatory element-binding protein (SREBP) -1, SREBP-2 and forms of the transcriptional activator ATF6. SREBP-2 is cleaved at the site 477-DRSRILL-|-CVLTFLCLSFNPLTSLLQWGGA-505. The residues Asn-Pro, 11 residues distal to the site of cleavage in the membrane-spanning domain, are important for cleavage by S2P endopeptidase. Replacement of either of these residues does not prevent cleavage, but there is no cleavage if both of these residues are replaced.. Functionally, zinc metalloprotease that mediates intramembrane proteolysis of proteins such as ATF6, ATF6B, SREBF1/SREBP1 and SREBF2/SREBP2. Catalyzes the second step in the proteolytic activation of the sterol regulatory element-binding proteins (SREBPs) SREBF1/SREBP1 and SREBF2/SREBP2: cleaves SREBPs within the first transmembrane segment, thereby releasing the N-terminal segment with a portion of the transmembrane segment attached. Mature N-terminal SREBP fragments shuttle to the nucleus and activate gene transcription. Also mediates the second step in the proteolytic activation of the cyclic AMP-dependent transcription factor ATF-6 (ATF6 and ATF6B). Involved in intramembrane proteolysis during bone formation. In astrocytes and osteoblasts, upon DNA damage and ER stress, mediates the second step of the regulated intramembrane proteolytic activation of the transcription factor CREB3L1, leading to the inhibition of cell-cycle progression. The polypeptide is Membrane-bound transcription factor site-2 protease (Mbtps2) (Mus musculus (Mouse)).